Here is a 382-residue protein sequence, read N- to C-terminus: Lactosylceramide 1,3-N-acetyl-beta-D-glucosaminyltransferase B (382 aa).

The Cytoplasmic segment spans residues 1-13 (MAVLKMPRFKKYH). Residues 14 to 30 (LRLMITCFSTLLLMTYW) traverse the membrane as a helical; Signal-anchor for type II membrane protein segment. Residues 31 to 382 (EKIDNCVVTH…CKAAFFEEDT (352 aa)) are Lumenal-facing. Asparagine 57, asparagine 112, asparagine 167, and asparagine 276 each carry an N-linked (GlcNAc...) asparagine glycan.

It belongs to the glycosyltransferase 31 family.

The protein localises to the golgi apparatus membrane. The catalysed reaction is a beta-D-Gal-(1-&gt;4)-beta-D-Glc-(1&lt;-&gt;1)-Cer(d18:1(4E)) + UDP-N-acetyl-alpha-D-glucosamine = a beta-D-GlcNAc-(1-&gt;3)-beta-D-Gal-(1-&gt;4)-beta-D-Glc-(1&lt;-&gt;1)-Cer(d18:1(4E)) + UDP + H(+). The enzyme catalyses a neolactoside nLc4Cer(d18:1(4E)) + UDP-N-acetyl-alpha-D-glucosamine = a neolactoside IV(3)-beta-GlcNAc-nLc4Cer(d18:1(4E)) + UDP + H(+). Its pathway is protein modification; protein glycosylation. In terms of biological role, beta-1,3-N-acetylglucosaminyltransferase that plays a key role in the synthesis of lacto- or neolacto-series carbohydrate chains on glycolipids. In Danio rerio (Zebrafish), this protein is Lactosylceramide 1,3-N-acetyl-beta-D-glucosaminyltransferase B (b3gnt5b).